The chain runs to 366 residues: BIIDXI-like protein At5g11420 (366 aa).

The N-terminal stretch at 1 to 22 (MKGGSLSFLFVLLIATITSVIC) is a signal peptide. N-linked (GlcNAc...) asparagine glycans are attached at residues Asn98, Asn122, and Asn209.

In terms of assembly, interacts with PME3.

Its subcellular location is the secreted. It is found in the cell wall. Its function is as follows. Together with BIIDXI, acts as a positive regulator of PME3 activity during several developmental processes, including seed germination and endosperm (testa) rupture at the micropyle, probably by modulating the pectin status in cell walls. This Arabidopsis thaliana (Mouse-ear cress) protein is BIIDXI-like protein At5g11420.